The sequence spans 206 residues: Synaptosomal-associated protein 25 (206 aa).

Residues 1–20 (MAEDADMRNELEEMQRRADQ) are compositionally biased toward basic and acidic residues. The tract at residues 1-23 (MAEDADMRNELEEMQRRADQLAD) is disordered. A t-SNARE coiled-coil homology 1 domain is found at 19–81 (DQLADESLES…KEAEKNLTDL (63 aa)). Residues Cys85, Cys88, Cys90, and Cys92 are each lipidated (S-palmitoyl cysteine). A Phosphothreonine modification is found at Thr138. The t-SNARE coiled-coil homology 2 domain maps to 140–202 (DARENEMDEN…DEANQRATKM (63 aa)). Ser187 carries the phosphoserine modification.

Belongs to the SNAP-25 family. In terms of assembly, part of the SNARE core complex containing SNAP25, VAMP2 and STX1A. This complex binds CPLX1. Interacts with TRIM9, RIMS1 and SNAPIN. Binds STXBP6. Found in a ternary complex with STX1A and VAMP8. Associates with the BLOC-1 complex. Isoform 1 and isoform 2 interact with BLOC1S6. Interacts with alpha-synuclein/SNCA. In terms of processing, palmitoylated. Cys-85 appears to be the main site, and palmitoylation is required for membrane association.

The protein resides in the membrane. It is found in the synapse. The protein localises to the synaptosome. It localises to the cell membrane. T-SNARE involved in the molecular regulation of neurotransmitter release. May play an important role in the synaptic function of specific neuronal systems. Associates with proteins involved in vesicle docking and membrane fusion. The polypeptide is Synaptosomal-associated protein 25 (SNAP25) (Gallus gallus (Chicken)).